The sequence spans 396 residues: Ribosomal RNA large subunit methyltransferase I (396 aa).

One can recognise a PUA domain in the interval 2-81; it reads TVRLILAKGR…EVIDCAFFIR (80 aa).

The protein belongs to the methyltransferase superfamily. RlmI family.

The protein localises to the cytoplasm. It carries out the reaction cytidine(1962) in 23S rRNA + S-adenosyl-L-methionine = 5-methylcytidine(1962) in 23S rRNA + S-adenosyl-L-homocysteine + H(+). Specifically methylates the cytosine at position 1962 (m5C1962) of 23S rRNA. The chain is Ribosomal RNA large subunit methyltransferase I from Yersinia pestis bv. Antiqua (strain Antiqua).